We begin with the raw amino-acid sequence, 231 residues long: Cytochrome c oxidase assembly factor 7 (231 aa).

Alanine 2 carries the post-translational modification N-acetylalanine. Sel1-like repeat units follow at residues 34–66 (PDGCYRLVDYLEGIRKNFDEAAKVLKFNCEENQ), 68–104 (SDSCYKLGAYYVTGKGGLTQDLKAAARCFLMACEKPG), 108–146 (IAACHNVGLLAHDGQVNEDGQPDLGKARDYYTRACDGGY), 147–183 (TSSCFNLSAMFLQGAPGFPKDMDLACKYSMKACDLGH), and 184–219 (IWACANASRMYKLGDGVDKDEAKAEVLKNRAQQLHK).

It belongs to the hcp beta-lactamase family. As to quaternary structure, interacts with CHCHD4/MIA40 through transient intermolecular disulfide bonds.

The protein localises to the mitochondrion intermembrane space. Required for assembly of mitochondrial respiratory chain complex I and complex IV. This is Cytochrome c oxidase assembly factor 7 (COA7) from Homo sapiens (Human).